We begin with the raw amino-acid sequence, 539 residues long: MHDKILILDFGSQVTQLIARRVREAHVYCEIHPNDVSDDFVREFAPKGVILSGSHASTYEDHQLRAPQAVWDLGVPVLGICYGMQTMAVQLGGKVEWSDHREFGYAEVRAHGRTRLLDGIQDFATPEGHGMLKVWMSHGDKVGEMPPGFALMASTPSCPIAGMADEARGYYAVQFHPEVTHTVQGRKLLERFVLDIAGAKPDWIMRDHIEEAVARIREQVGDEEVILGLSGGVDSSVAAALIHRAIGDQLTCVFVDHGLLRLNEGKMVLDMFEGRLHAKVVHVDASEQFLGHLAGVADPEHKRKIIGREFVEVFQAEAKKLTNAKWLAQGTIYPDVIESGGAKTKKATTIKSHHNVGGLPETLGLKLLEPLRDLFKDEVRELGVALGLPAEMVYRHPFPGPGLGVRILGEVKRDYAELLRRADAIFIEELRGTLATEQDAAAGLCEPSQVGKSWYDLTSQAFAVFLPVKSVGVMGDGRTYDYVAALRAVQTTDFMTAHWAHLPYALLGRASNRIINEVRGINRVVYDVSGKPPATIEWE.

The region spanning 4-202 (KILILDFGSQ…VLDIAGAKPD (199 aa)) is the Glutamine amidotransferase type-1 domain. C81 acts as the Nucleophile in catalysis. Catalysis depends on residues H176 and E178. Residues 203–395 (WIMRDHIEEA…LGLPAEMVYR (193 aa)) enclose the GMPS ATP-PPase domain. 230–236 (SGGVDSS) contributes to the ATP binding site.

Homodimer.

The catalysed reaction is XMP + L-glutamine + ATP + H2O = GMP + L-glutamate + AMP + diphosphate + 2 H(+). It functions in the pathway purine metabolism; GMP biosynthesis; GMP from XMP (L-Gln route): step 1/1. Its function is as follows. Catalyzes the synthesis of GMP from XMP. The chain is GMP synthase [glutamine-hydrolyzing] from Burkholderia pseudomallei (strain 1106a).